A 249-amino-acid chain; its full sequence is Proteasome subunit alpha type-3 (249 aa).

This sequence belongs to the peptidase T1A family. As to quaternary structure, the 26S proteasome consists of a 20S proteasome core and two 19S regulatory subunits. The 20S proteasome core is composed of 28 subunits that are arranged in four stacked rings, resulting in a barrel-shaped structure. The two end rings are each formed by seven alpha subunits, and the two central rings are each formed by seven beta subunits. The catalytic chamber with the active sites is on the inside of the barrel.

It is found in the cytoplasm. It localises to the nucleus. In terms of biological role, the proteasome is a multicatalytic proteinase complex which is characterized by its ability to cleave peptides with Arg, Phe, Tyr, Leu, and Glu adjacent to the leaving group at neutral or slightly basic pH. The proteasome has an ATP-dependent proteolytic activity. The protein is Proteasome subunit alpha type-3 (PAG1) of Oryza sativa subsp. japonica (Rice).